Consider the following 227-residue polypeptide: Probable septum site-determining protein MinC (227 aa).

It belongs to the MinC family. In terms of assembly, interacts with MinD and FtsZ.

Its function is as follows. Cell division inhibitor that blocks the formation of polar Z ring septums. Rapidly oscillates between the poles of the cell to destabilize FtsZ filaments that have formed before they mature into polar Z rings. Prevents FtsZ polymerization. This is Probable septum site-determining protein MinC from Bacillus pumilus (strain SAFR-032).